The chain runs to 844 residues: Neuronal PAS domain-containing protein 4B (844 aa).

The basic motif; degenerate stretch occupies residues 61 to 74 (KMYRSTKGASKARR). The 54-residue stretch at 61 to 114 (KMYRSTKGASKARRDQINAEIRSLKELLPISDADKARLSYLHIMSLACIYTRKS) folds into the bHLH domain. Positions 75-114 (DQINAEIRSLKELLPISDADKARLSYLHIMSLACIYTRKS) are helix-loop-helix motif. PAS domains are found at residues 132 to 190 (SLPE…PVDH) and 294 to 343 (DMRI…LHNG). Residues 410 to 422 (SRQSSDPLSSPDQ) show a composition bias toward polar residues. Disordered regions lie at residues 410–432 (SRQS…SGLS), 444–479 (GRSS…GGGH), 702–725 (PLPN…SYSQ), and 757–784 (TEGG…EAPA). Residues 704-716 (PNLPSPSPVPPSP) are compositionally biased toward pro residues.

Efficient DNA binding requires dimerization with another bHLH protein.

Its subcellular location is the nucleus. Functionally, transcription factor expressed in neurons of the brain that regulates the excitatory-inhibitory balance within neural circuits and is required for contextual memory in the hippocampus. Plays a key role in the structural and functional plasticity of neurons. Acts as an early-response transcription factor in both excitatory and inhibitory neurons, where it induces distinct but overlapping sets of late-response genes in these two types of neurons, allowing the synapses that form on inhibitory and excitatory neurons to be modified by neuronal activity in a manner specific to their function within a circuit, thereby facilitating appropriate circuit responses to sensory experience. This Danio rerio (Zebrafish) protein is Neuronal PAS domain-containing protein 4B (npas4b).